The sequence spans 455 residues: Asparagine--tRNA ligase (455 aa).

It belongs to the class-II aminoacyl-tRNA synthetase family. In terms of assembly, homodimer.

Its subcellular location is the cytoplasm. It catalyses the reaction tRNA(Asn) + L-asparagine + ATP = L-asparaginyl-tRNA(Asn) + AMP + diphosphate + H(+). The chain is Asparagine--tRNA ligase from Mycoplasma pneumoniae (strain ATCC 29342 / M129 / Subtype 1) (Mycoplasmoides pneumoniae).